Here is a 321-residue protein sequence, read N- to C-terminus: tRNA-dihydrouridine synthase B (321 aa).

Residues 16–18 (PMA) and glutamine 70 contribute to the FMN site. Cysteine 100 (proton donor) is an active-site residue. FMN-binding positions include lysine 139, 200 to 202 (NGD), and 224 to 225 (GR).

It belongs to the Dus family. DusB subfamily. It depends on FMN as a cofactor.

The enzyme catalyses a 5,6-dihydrouridine in tRNA + NAD(+) = a uridine in tRNA + NADH + H(+). The catalysed reaction is a 5,6-dihydrouridine in tRNA + NADP(+) = a uridine in tRNA + NADPH + H(+). In terms of biological role, catalyzes the synthesis of 5,6-dihydrouridine (D), a modified base found in the D-loop of most tRNAs, via the reduction of the C5-C6 double bond in target uridines. In Yersinia pestis, this protein is tRNA-dihydrouridine synthase B.